The following is a 175-amino-acid chain: uncharacterized protein (175 aa).

The transit peptide at 1 to 11 directs the protein to the mitochondrion; sequence METWRKGSFRN. The interval 29–48 is disordered; the sequence is QGSILSQASTAGGDHEEYSN.

The protein localises to the mitochondrion. This is an uncharacterized protein from Mus musculus (Mouse).